We begin with the raw amino-acid sequence, 248 residues long: Myelin protein P0 (248 aa).

The first 29 residues, 1-29 (MAPGAPSSSPSPILAVLLFSSLVLSPAQA), serve as a signal peptide directing secretion. One can recognise an Ig-like V-type domain in the interval 30–143 (IVVYTDREVH…DIVGKTSQVT (114 aa)). Residues 30–153 (IVVYTDREVH…LYVFEKVPTR (124 aa)) are Extracellular-facing. Cysteines 50 and 127 form a disulfide. An N-linked (GlcNAc...) (complex) asparagine glycan is attached at N122. The helical transmembrane segment at 154 to 179 (YGVVLGAVIGGVLGVVLLLLLLFYVV) threads the bilayer. Residues 180 to 248 (RYCWLRRQAA…GLGESRKDKK (69 aa)) lie on the Cytoplasmic side of the membrane. At S210 the chain carries Phosphoserine; by PKC. The segment at 224–248 (DHSRSTKAVSEKKAKGLGESRKDKK) is disordered. Phosphoserine occurs at positions 226 and 228. Residues S233 and S243 each carry the phosphoserine; by PKC modification.

It belongs to the myelin P0 protein family. Homodimer and homotetramer. Post-translationally, N-glycosylated; contains sulfate-substituted glycan. In terms of tissue distribution, found only in peripheral nervous system Schwann cells.

Its subcellular location is the cell membrane. It localises to the myelin membrane. Its function is as follows. Is an adhesion molecule necessary for normal myelination in the peripheral nervous system. It mediates adhesion between adjacent myelin wraps and ultimately drives myelin compaction. The sequence is that of Myelin protein P0 (MPZ) from Homo sapiens (Human).